A 309-amino-acid polypeptide reads, in one-letter code: Taste receptor type 2 member 8 (309 aa).

Topologically, residues 1–7 are extracellular; sequence MFSPADN. The helical transmembrane segment at 8 to 28 threads the bilayer; it reads IFIILITGEFIIGILGNGYIG. At 29–50 the chain is on the cytoplasmic side; that stretch reads LVNWIDWIKKKKISTIDCILTN. Residues 51-71 form a helical membrane-spanning segment; sequence LVISRICLISVMVVNGIVIVL. The Extracellular segment spans residues 72-82; it reads YPDVYTKTKLQ. A helical transmembrane segment spans residues 83 to 103; it reads IVICTFWTFANYLNMWFTACL. Topologically, residues 104 to 131 are cytoplasmic; the sequence is NVFYSLKVANSSHPLFLWLKRKIDMVVR. A helical membrane pass occupies residues 132-152; it reads WILLGCFAISLLVSLIIATVL. Residues 153-184 lie on the Extracellular side of the membrane; it reads SHDYRFHAIAKHKRNVTEMFHVSKMPYFEPLT. N-linked (GlcNAc...) asparagine glycosylation is present at Asn-167. The helical transmembrane segment at 185 to 205 threads the bilayer; it reads LFNLLAIVPFIVSLMSFFLLV. Topologically, residues 206-239 are cytoplasmic; that stretch reads RSLWRHTKQIKLYATGGRDPSTEAHVRAIKTMTL. Residues 240–260 form a helical membrane-spanning segment; sequence LIFFFFLYYITSLLVXFSYLI. Residues 261-266 are Extracellular-facing; it reads TNYKLA. The chain crosses the membrane as a helical span at residues 267 to 287; sequence MAFGEIVAILYPSGHSLILII. The Cytoplasmic segment spans residues 288 to 309; that stretch reads LNNKLRQASVRMLTCRKIACVT.

This sequence belongs to the G-protein coupled receptor T2R family.

The protein localises to the membrane. Its function is as follows. Receptor that may play a role in the perception of bitterness and is gustducin-linked. May play a role in sensing the chemical composition of the gastrointestinal content. The activity of this receptor may stimulate alpha gustducin, mediate PLC-beta-2 activation and lead to the gating of TRPM5. This chain is Taste receptor type 2 member 8 (TAS2R8), found in Papio hamadryas (Hamadryas baboon).